The primary structure comprises 271 residues: Type III pantothenate kinase (271 aa).

6 to 13 (DVRNTNIV) lines the ATP pocket. 109 to 112 (GADR) contributes to the substrate binding site. Aspartate 111 serves as the catalytic Proton acceptor. Aspartate 131 contacts K(+). Threonine 134 is a binding site for ATP. Position 186 (threonine 186) interacts with substrate.

The protein belongs to the type III pantothenate kinase family. In terms of assembly, homodimer. Requires NH4(+) as cofactor. K(+) serves as cofactor.

The protein localises to the cytoplasm. It catalyses the reaction (R)-pantothenate + ATP = (R)-4'-phosphopantothenate + ADP + H(+). It participates in cofactor biosynthesis; coenzyme A biosynthesis; CoA from (R)-pantothenate: step 1/5. In terms of biological role, catalyzes the phosphorylation of pantothenate (Pan), the first step in CoA biosynthesis. This chain is Type III pantothenate kinase, found in Rhodococcus jostii (strain RHA1).